A 507-amino-acid polypeptide reads, in one-letter code: MRKGGIQDAEPVEPPQSSRKSGTWFAKRPSEMPERHVERAPVRQKINNVGLYKATLYSNIGSFFFGIAVGWSGTAERSVMEQHSYSFQPTELQWSGVCILLTLGAALWCLPMGLMVRLLGCRRTILIQLLPNFLGWFLTVFARSVPMLYAGRFFLGMCGGAHCVVVPIYNAEISTTKKRGAMGVVFEGACICGVIYSFAMSLFLELRIINFVNLGLLALGPLQILMPESPAYYVDHGNIPRAEDSLRFLRGQKYDTRREIDFLTRDPTESEREVRQGPLLGFKYKKVRRSLARSLAIALLQKLCGALIFIFYGLNMLDCLRIRREFGLILCLGLILGFLACFFLVDRLGRRPLLIFSSAGIVFVSIYLGLHFKVWMTMGLTVMSWIALFCIAIFVGCYTAGVGSLTWVLNAELLVRPMRPLGCSIVCAFNWLTAFFVICWFGSHGVKCQPYLFLLFAIIASLILLFSLIYIPETKKLSSAKIQQRLGGLINRPAVITFTSSSDSSNA.

The segment at 1–26 (MRKGGIQDAEPVEPPQSSRKSGTWFA) is disordered. Topologically, residues 1–53 (MRKGGIQDAEPVEPPQSSRKSGTWFAKRPSEMPERHVERAPVRQKINNVGLYK) are cytoplasmic. A helical transmembrane segment spans residues 54–74 (ATLYSNIGSFFFGIAVGWSGT). The Extracellular portion of the chain corresponds to 75-95 (AERSVMEQHSYSFQPTELQWS). A helical transmembrane segment spans residues 96 to 116 (GVCILLTLGAALWCLPMGLMV). Residues 117–124 (RLLGCRRT) lie on the Cytoplasmic side of the membrane. A helical transmembrane segment spans residues 125–145 (ILIQLLPNFLGWFLTVFARSV). Residues 146 to 152 (PMLYAGR) are Extracellular-facing. The chain crosses the membrane as a helical span at residues 153–173 (FFLGMCGGAHCVVVPIYNAEI). The Cytoplasmic portion of the chain corresponds to 174-183 (STTKKRGAMG). Residues 184–204 (VVFEGACICGVIYSFAMSLFL) form a helical membrane-spanning segment. Residues 205 to 207 (ELR) lie on the Extracellular side of the membrane. Residues 208–228 (IINFVNLGLLALGPLQILMPE) traverse the membrane as a helical segment. The Cytoplasmic segment spans residues 229–293 (SPAYYVDHGN…YKKVRRSLAR (65 aa)). The chain crosses the membrane as a helical span at residues 294 to 314 (SLAIALLQKLCGALIFIFYGL). The Extracellular portion of the chain corresponds to 315-324 (NMLDCLRIRR). The helical transmembrane segment at 325 to 345 (EFGLILCLGLILGFLACFFLV) threads the bilayer. At 346–351 (DRLGRR) the chain is on the cytoplasmic side. The helical transmembrane segment at 352–372 (PLLIFSSAGIVFVSIYLGLHF) threads the bilayer. The Extracellular portion of the chain corresponds to 373-374 (KV). Residues 375–395 (WMTMGLTVMSWIALFCIAIFV) traverse the membrane as a helical segment. At 396-420 (GCYTAGVGSLTWVLNAELLVRPMRP) the chain is on the cytoplasmic side. The chain crosses the membrane as a helical span at residues 421–441 (LGCSIVCAFNWLTAFFVICWF). At 442-450 (GSHGVKCQP) the chain is on the extracellular side. Residues 451-471 (YLFLLFAIIASLILLFSLIYI) traverse the membrane as a helical segment. Topologically, residues 472–507 (PETKKLSSAKIQQRLGGLINRPAVITFTSSSDSSNA) are cytoplasmic.

This sequence belongs to the major facilitator superfamily. Sugar transporter (TC 2.A.1.1) family. Glucose transporter subfamily.

Its subcellular location is the cell membrane. It is found in the perikaryon. It localises to the cell projection. In terms of biological role, facilitative glucose transporter that can also mediate the uptake of various other monosaccharides across the cell membrane. This is Glucose transporter type 3 (Glut3) from Drosophila melanogaster (Fruit fly).